We begin with the raw amino-acid sequence, 276 residues long: Large ribosomal subunit protein uL2 (276 aa).

Positions 212-276 (NRHRGIRPQT…KLIISRKKHK (65 aa)) are disordered. The segment covering 257–276 (YKTRKKKASDKLIISRKKHK) has biased composition (basic residues).

This sequence belongs to the universal ribosomal protein uL2 family. Part of the 50S ribosomal subunit. Forms a bridge to the 30S subunit in the 70S ribosome.

One of the primary rRNA binding proteins. Required for association of the 30S and 50S subunits to form the 70S ribosome, for tRNA binding and peptide bond formation. It has been suggested to have peptidyltransferase activity; this is somewhat controversial. Makes several contacts with the 16S rRNA in the 70S ribosome. The sequence is that of Large ribosomal subunit protein uL2 from Helicobacter acinonychis (strain Sheeba).